The primary structure comprises 567 residues: Putative laccase-17 (567 aa).

An N-terminal signal peptide occupies residues 1-22 (MPSRGCSCWLLSLALLCSLAAA). 2 consecutive Plastocyanin-like domains span residues 30-146 (VIRE…PRDG) and 158-310 (ELAP…YGAA). A glycan (N-linked (GlcNAc...) asparagine) is linked at asparagine 76. The Cu cation site is built by histidine 80, histidine 82, histidine 125, and histidine 127. N-linked (GlcNAc...) asparagine glycosylation is found at asparagine 187, asparagine 241, asparagine 298, asparagine 312, asparagine 327, asparagine 365, asparagine 368, asparagine 378, asparagine 388, and asparagine 430. The Plastocyanin-like 3 domain maps to 415-551 (DFPANPPVQF…AMAFLVDDGV (137 aa)). Cu cation contacts are provided by histidine 468, histidine 471, histidine 473, histidine 530, cysteine 531, histidine 532, and histidine 536.

The protein belongs to the multicopper oxidase family. Cu cation is required as a cofactor.

Its subcellular location is the secreted. It localises to the extracellular space. The protein resides in the apoplast. It catalyses the reaction 4 hydroquinone + O2 = 4 benzosemiquinone + 2 H2O. Functionally, lignin degradation and detoxification of lignin-derived products. In Oryza sativa subsp. japonica (Rice), this protein is Putative laccase-17 (LAC17).